The primary structure comprises 403 residues: MTEVLKTNVLQSNENIVQYYTQKIQDAELAILQKTQNLRRLEAQRNGLNARVRLLREEIQLLQEPGSYVGEVIKTMGKNKVLVKVHPEGKYVVDISPDIDIKEIKPNIRVALRNDSYQLIKILPNKVDPLVSLMMVEKIPDSTYEMVGGLEKQIKEIKEVIELPVKHPELFESLGIPQPKGILLYGPPGTGKTLLARAVAHHTDCKFIRVSGSELVQKYIGEGSRMVRELFVMAREHAPSIIFMDEIDSIGSSRSDSSGGSGDSEVQRTMLELLNQLDGFEATKNIKVIMATNRIDILDPALLRPGRIDRKIEFPPPSAEARAEILRIHSRSMNLTRGIDLKSIAEKMNGASGAELKGVCTEAGMFALRERRVHVTQEDFELAVAKVLNKGDSGEMSLQKLFK.

186–193 (GPPGTGKT) provides a ligand contact to ATP.

The protein belongs to the AAA ATPase family.

The protein resides in the cytoplasm. The protein localises to the nucleus. Functionally, the 26S proteasome is involved in the ATP-dependent degradation of ubiquitinated proteins. The regulatory (or ATPase) complex confers ATP dependency and substrate specificity to the 26S complex. In Schizosaccharomyces pombe (strain 972 / ATCC 24843) (Fission yeast), this protein is 26S proteasome regulatory subunit 8 homolog (let1).